A 281-amino-acid polypeptide reads, in one-letter code: 16S rRNA (guanine(1405)-N(7))-methyltransferase (281 aa).

Residues tyrosine 60, 105–107 (HTS), arginine 111, glycine 136, aspartate 160, 186–187 (QG), phenylalanine 203, and glutamine 212 each bind S-adenosyl-L-methionine.

This sequence belongs to the methyltransferase superfamily. Aminoglycoside resistance family.

It carries out the reaction guanosine(1405) in 16S rRNA + S-adenosyl-L-methionine = N(7)-methylguanosine(1405) in 16S rRNA + S-adenosyl-L-homocysteine. In terms of biological role, specifically methylates the N(7) position of guanine 1405 in 16S rRNA. Confers resistance to various aminoglycosides, including gentamicin and kanamycin. This is 16S rRNA (guanine(1405)-N(7))-methyltransferase (rmtC) from Proteus mirabilis.